An 81-amino-acid polypeptide reads, in one-letter code: uncharacterized protein (81 aa).

Positions 1 to 45 (MRTTIDVAGRLVIPKRIRERLGLRGNDQVEITERDGRIEIEPAPT) constitute a SpoVT-AbrB domain.

It to B.subtilis SpoVT.

This is an uncharacterized protein from Mycobacterium bovis (strain ATCC BAA-935 / AF2122/97).